Consider the following 153-residue polypeptide: MQLTELIETTVTGLGYELVDLERTGRGMVCVYIDQPAGITIDDCEKVTRQLQHVLTVENIDYERLEVSSPGLDRPLKKLADFTRFAGSEAVITLKKPLDGRKTYRGILHAPNGETIGLEFERKKGEAAMLDFTLADVDKARLIPHVDFRSRKQ.

This sequence belongs to the RimP family.

Its subcellular location is the cytoplasm. Required for maturation of 30S ribosomal subunits. The polypeptide is Ribosome maturation factor RimP (Burkholderia pseudomallei (strain 1710b)).